Consider the following 253-residue polypeptide: Hydroxyacylglutathione hydrolase (253 aa).

Positions 59, 61, 63, 64, 118, 143, and 181 each coordinate Zn(2+).

This sequence belongs to the metallo-beta-lactamase superfamily. Glyoxalase II family. As to quaternary structure, monomer. The cofactor is Zn(2+).

The enzyme catalyses an S-(2-hydroxyacyl)glutathione + H2O = a 2-hydroxy carboxylate + glutathione + H(+). The protein operates within secondary metabolite metabolism; methylglyoxal degradation; (R)-lactate from methylglyoxal: step 2/2. Functionally, thiolesterase that catalyzes the hydrolysis of S-D-lactoyl-glutathione to form glutathione and D-lactic acid. The sequence is that of Hydroxyacylglutathione hydrolase from Prochlorococcus marinus (strain MIT 9211).